A 223-amino-acid chain; its full sequence is Ribose-5-phosphate isomerase A (223 aa).

Substrate contacts are provided by residues 32–35 (TGST), 83–86 (DGAD), and 96–99 (KGGG). The Proton acceptor role is filled by Glu105. A substrate-binding site is contributed by Lys123.

Belongs to the ribose 5-phosphate isomerase family. In terms of assembly, homodimer.

It carries out the reaction aldehydo-D-ribose 5-phosphate = D-ribulose 5-phosphate. Its pathway is carbohydrate degradation; pentose phosphate pathway; D-ribose 5-phosphate from D-ribulose 5-phosphate (non-oxidative stage): step 1/1. In terms of biological role, catalyzes the reversible conversion of ribose-5-phosphate to ribulose 5-phosphate. The chain is Ribose-5-phosphate isomerase A from Acinetobacter baumannii (strain ATCC 17978 / DSM 105126 / CIP 53.77 / LMG 1025 / NCDC KC755 / 5377).